The chain runs to 653 residues: Cytidine monophosphate-N-acetylneuraminic acid hydroxylase (653 aa).

The Rieske domain maps to 11–120 (LSPEETSELK…PEYNEDGSLD (110 aa)). [2Fe-2S] cluster-binding residues include Cys62, His64, Cys83, and His86. A disordered region spans residues 596–622 (WNPSQATPAVEAKDPSSDSKDSATKPG). Residues 606 to 618 (EAKDPSSDSKDSA) are compositionally biased toward basic and acidic residues. A helical transmembrane segment spans residues 630–647 (LLRPLGIVVALVGVGVAI).

Belongs to the CMP-Neu5Ac hydroxylase family. Requires [2Fe-2S] cluster as cofactor.

It is found in the membrane. The catalysed reaction is CMP-N-acetyl-beta-neuraminate + 2 Fe(II)-[cytochrome b5] + O2 + 2 H(+) = CMP-N-glycoloyl-beta-neuraminate + 2 Fe(III)-[cytochrome b5] + H2O. Its pathway is amino-sugar metabolism; N-acetylneuraminate metabolism. Its function is as follows. Sialic acids are components of carbohydrate chains of glycoconjugates and are involved in cell-cell recognition and cell-pathogen interactions. Catalyzes the conversion of CMP-N-acetylneuraminic acid (CMP-Neu5Ac) into its hydroxylated derivative CMP-N-glycolylneuraminic acid (CMP-Neu5Gc), a sialic acid abundantly expressed at the surface of many cells. This chain is Cytidine monophosphate-N-acetylneuraminic acid hydroxylase (cnh), found in Asterias rubens (Common European starfish).